The primary structure comprises 1507 residues: DE-cadherin (1507 aa).

An N-terminal signal peptide occupies residues 1–69 (MSTSVQRMSR…AISLLSPALA (69 aa)). Positions 70-261 (LHSPPDKNFS…IYLKRPIDKR (192 aa)) are excised as a propeptide. 7 consecutive Cadherin domains span residues 97 to 195 (VKEE…APAF), 204 to 301 (MSEN…PPSF), 311 to 412 (LKEN…IPYY), 420 to 522 (ILEN…KPHF), 532 to 633 (LLED…TILE), 631 to 733 (ILEE…APFL), and 741 to 835 (WQEN…NDNA). The Extracellular portion of the chain corresponds to 262 to 1328 (PGQSYAIIVR…VAFSFGIDRN (1067 aa)). 3 N-linked (GlcNAc...) asparagine glycosylation sites follow: N317, N466, and N552. N-linked (GlcNAc...) asparagine glycans are attached at residues N766, N949, N983, N999, and N1073. Residues 1084 to 1123 (VQAQCVCEAPLMRRCLNGGSPRYGENDVCDCIDGFTGPHC) enclose the EGF-like domain. Cystine bridges form between C1098–C1112 and C1114–C1123. The Laminin G-like domain occupies 1125–1313 (LVSVAFYGSG…SVFRNIDSGC (189 aa)). N1145, N1274, and N1290 each carry an N-linked (GlcNAc...) asparagine glycan. Residues C1287 and C1313 are joined by a disulfide bond. A helical membrane pass occupies residues 1329–1349 (FIIAIIVCLALLLIILLAVVV). Over 1350-1507 (QKKQKNGWHE…NVDDDQGWRI (158 aa)) the chain is Cytoplasmic. Positions 1350-1507 (QKKQKNGWHE…NVDDDQGWRI (158 aa)) are interaction with Inx2. Residues 1488-1507 (YGEEPSDTDSNVDDDQGWRI) are disordered. Phosphoserine is present on S1493.

Interacts (via cytoplasmic region) with Inx2 (via cytoplasmic loop). Interacts with Hakai. Interacts with Myo31DF. In terms of processing, N-glycosylation is important for biosynthesis and function. In early stage 9 and stage 10 oocytes, expressed in border cells, strongly expressed in polar cells and very weakly expressed in the nurse cells (at protein level). In the embryo, expressed in the leading edge cells of the dorsal epidermis (at protein level). Stage 10 embryos exhibit intense expression in epithelial cells. Stage 14 embryos show expression in the hindgut (at the apical poles of cell-cell boundaries), at the apical junctions of tracheal cells and in the dorsal longitudinal trunk. In stage 16 embryos the glial midline cells of the central nervous system show strong expression.

The protein resides in the cell membrane. The protein localises to the apical cell membrane. Its function is as follows. Cadherins are calcium-dependent cell adhesion proteins. In connecting cells they preferentially interact with themselves in a homophilic manner; cadherins may thus contribute to the sorting of heterogeneous cell types. During oogenesis, integral component of the guidance mechanisms that regulate the directional persistent collective migration of the border cell (BC) cluster through the nurse cells to the oocyte. Functions downstream of the two chemoattractant receptors, Pvr and Egfr, to promote BC adhesion between the leader cells of the migrating cluster and the surrounding nurse cells. This adhesion increases Rac1 signaling in the leading cells, which in turn stabilizes DE-cadherin/DE-cadherin adhesions through the formation of forward-directed protrusions which attach/detach to the surrounding nurse cells in order to pull the cluster through the egg chamber to the oocyte. Within the BC cluster, also promotes adhesion between BCs, and between BCs and polar cells which enables the lead BC to communicate direction to the other cells in the cluster, providing polarity to each individual cell and ensuring collective behavior. May function in cell intercalation in the lateral epidermis during germband extension. Contributes to the determination of body left-right asymmetry by enhancing Myo31DF activity and inhibiting Myo61F activity. The sequence is that of DE-cadherin from Drosophila melanogaster (Fruit fly).